We begin with the raw amino-acid sequence, 457 residues long: Non-structural protein V (457 aa).

2 disordered regions span residues 26–104 and 193–403; these read KTYG…DPDD and FVPK…MPIK. Composition is skewed to polar residues over residues 28-37 and 77-96; these read YGRSSIQQPS and DLSS…SNTR. The span at 240–252 shows a compositional bias: acidic residues; it reads SDDEDENQLEYED. Serine 257 is subject to Phosphoserine; by host. The segment covering 296 to 317 has biased composition (basic and acidic residues); the sequence is FPEKEETPDVRRKDSLMQDSCK. Serine 350 bears the Phosphoserine; by host mark. Zn(2+) is bound by residues histidine 406, cysteine 425, cysteine 429, cysteine 441, cysteine 443, cysteine 446, cysteine 450, and cysteine 453.

Belongs to the paramyxoviruses V protein family. In terms of assembly, interacts with host IFIH1/MDA5, DHX58/LGP2, STAT1 and STAT2.

Its subcellular location is the host cytoplasm. In terms of biological role, plays an essential role in the inhibition of host immune response. Prevents the establishment of cellular antiviral state by blocking interferon-alpha/beta (IFN-alpha/beta) production and signaling pathway. Interacts with host IFIH1/MDA5 and DHX58/LGP2 to inhibit the transduction pathway involved in the activation of IFN-beta promoter, thus protecting the virus against cell antiviral state. Blocks the type I interferon signaling pathway by interacting with host STAT1 and STAT2 and thereby inhibiting their phosphorylation and subsequent nuclear translocation. Efficiently blocks the type II interferon signaling pathway. The chain is Non-structural protein V (P/V/C) from Hendra virus (isolate Horse/Autralia/Hendra/1994).